Reading from the N-terminus, the 235-residue chain is Probable queuosine precursor transporter (235 aa).

Helical transmembrane passes span 17–37 (IIWLSFFHIFIIAASNYFVQI), 56–76 (FHSTWGTLTFPFIFLATDLTV), 87–107 (IIFVVMFPALIVSYVISVLFS), 127–147 (IAIASFAAYVVGQLLDVIVFN), 155–175 (WWVAPTSSMTFGSMADTFVFF), and 201–221 (FKLFIGIILFVPAYGVVLNVI).

Belongs to the vitamin uptake transporter (VUT/ECF) (TC 2.A.88) family. Q precursor transporter subfamily.

The protein localises to the cell inner membrane. Involved in the import of queuosine (Q) precursors, required for Q precursor salvage. The protein is Probable queuosine precursor transporter of Haemophilus influenzae (strain ATCC 51907 / DSM 11121 / KW20 / Rd).